A 271-amino-acid polypeptide reads, in one-letter code: Formamidopyrimidine-DNA glycosylase (271 aa).

Proline 2 serves as the catalytic Schiff-base intermediate with DNA. The active-site Proton donor is the glutamate 3. Lysine 58 serves as the catalytic Proton donor; for beta-elimination activity. DNA-binding residues include histidine 91, arginine 110, and arginine 152. The FPG-type zinc-finger motif lies at 237–271 (NVYGRGGKACKKCRKPLTEKKLGQRTTVYCTHCQK). Arginine 261 (proton donor; for delta-elimination activity) is an active-site residue.

It belongs to the FPG family. In terms of assembly, monomer. Zn(2+) serves as cofactor.

The enzyme catalyses Hydrolysis of DNA containing ring-opened 7-methylguanine residues, releasing 2,6-diamino-4-hydroxy-5-(N-methyl)formamidopyrimidine.. It catalyses the reaction 2'-deoxyribonucleotide-(2'-deoxyribose 5'-phosphate)-2'-deoxyribonucleotide-DNA = a 3'-end 2'-deoxyribonucleotide-(2,3-dehydro-2,3-deoxyribose 5'-phosphate)-DNA + a 5'-end 5'-phospho-2'-deoxyribonucleoside-DNA + H(+). Its function is as follows. Involved in base excision repair of DNA damaged by oxidation or by mutagenic agents. Acts as a DNA glycosylase that recognizes and removes damaged bases. Has a preference for oxidized purines, such as 7,8-dihydro-8-oxoguanine (8-oxoG). Has AP (apurinic/apyrimidinic) lyase activity and introduces nicks in the DNA strand. Cleaves the DNA backbone by beta-delta elimination to generate a single-strand break at the site of the removed base with both 3'- and 5'-phosphates. The protein is Formamidopyrimidine-DNA glycosylase of Saccharophagus degradans (strain 2-40 / ATCC 43961 / DSM 17024).